A 414-amino-acid polypeptide reads, in one-letter code: Probable sugar phosphate/phosphate translocator At1g06470 (414 aa).

9 consecutive transmembrane segments (helical) span residues 72 to 92 (VLKTLFFILVWYTFSTFLTLY), 101 to 121 (LGKFPAPLLMNTIHFSIQAVL), 172 to 192 (TFATMCKSAAPIFLLLFAFAF), 197 to 217 (PSLKLFGIISVISAGVLLTVA), 224 to 244 (FWGFVFVMLAAVMSGFRWCMT), 259 to 279 (FIFMSCVAPVMAIATGLLSLL), 303 to 323 (FLMLFGGALAFCMVLTEYVLV), 328 to 348 (AVTVTIAGVVKEAVTIVVAVF), and 354 to 374 (FTWLKGVGLMIIMVGVSLFNW). Residues 106-216 (APLLMNTIHF…VISAGVLLTV (111 aa)) form the EamA domain.

Belongs to the TPT transporter family. TPT (TC 2.A.7.9) subfamily.

Its subcellular location is the membrane. The polypeptide is Probable sugar phosphate/phosphate translocator At1g06470 (Arabidopsis thaliana (Mouse-ear cress)).